The following is a 611-amino-acid chain: Dihydroxy-acid dehydratase (611 aa).

Aspartate 81 is a binding site for Mg(2+). Residue cysteine 122 coordinates [2Fe-2S] cluster. Residues aspartate 123 and lysine 124 each coordinate Mg(2+). Residue lysine 124 is modified to N6-carboxylysine. Residue cysteine 195 coordinates [2Fe-2S] cluster. Glutamate 491 serves as a coordination point for Mg(2+). The active-site Proton acceptor is serine 517.

It belongs to the IlvD/Edd family. In terms of assembly, homodimer. It depends on [2Fe-2S] cluster as a cofactor. Mg(2+) serves as cofactor.

It catalyses the reaction (2R)-2,3-dihydroxy-3-methylbutanoate = 3-methyl-2-oxobutanoate + H2O. The enzyme catalyses (2R,3R)-2,3-dihydroxy-3-methylpentanoate = (S)-3-methyl-2-oxopentanoate + H2O. Its pathway is amino-acid biosynthesis; L-isoleucine biosynthesis; L-isoleucine from 2-oxobutanoate: step 3/4. The protein operates within amino-acid biosynthesis; L-valine biosynthesis; L-valine from pyruvate: step 3/4. In terms of biological role, functions in the biosynthesis of branched-chain amino acids. Catalyzes the dehydration of (2R,3R)-2,3-dihydroxy-3-methylpentanoate (2,3-dihydroxy-3-methylvalerate) into 2-oxo-3-methylpentanoate (2-oxo-3-methylvalerate) and of (2R)-2,3-dihydroxy-3-methylbutanoate (2,3-dihydroxyisovalerate) into 2-oxo-3-methylbutanoate (2-oxoisovalerate), the penultimate precursor to L-isoleucine and L-valine, respectively. In Actinobacillus pleuropneumoniae serotype 5b (strain L20), this protein is Dihydroxy-acid dehydratase.